Here is a 151-residue protein sequence, read N- to C-terminus: Neuroglobin (151 aa).

In terms of domain architecture, Globin spans 1-149 (MERPEPELIR…VVQAMSRGWD (149 aa)). Heme b-binding residues include His-64 and His-96.

This sequence belongs to the globin family. In terms of assembly, monomer. Homodimer and homotetramer; disulfide-linked. Mainly monomeric but also detected as part of homodimers and homotetramers. Interacts with 14-3-3 proteins; regulates the phosphorylation of NGB. Could interact (ferrous form) with G-alpha(i) proteins (GTP-bound form). In terms of processing, phosphorylated during hypoxia by ERK1/ERK2. Phosphorylation regulates the heme pocket hexacoordination preventing the association of His-64 with the heme metal center. Thereby, promotes the access of dioxygen and nitrite to the heme and stimulates the nitrite reductase activity. Phosphorylation during hypoxia is stabilized by 14-3-3 proteins.

The protein resides in the cytoplasm. The protein localises to the cytosol. It is found in the mitochondrion matrix. The catalysed reaction is Fe(III)-heme b-[protein] + nitric oxide + H2O = Fe(II)-heme b-[protein] + nitrite + 2 H(+). Functionally, monomeric globin with a bis-histidyl six-coordinate heme-iron atom through which it can bind dioxygen, carbon monoxide and nitric oxide. Could help transport oxygen and increase its availability to the metabolically active neuronal tissues, though its low quantity in tissues as well as its high affinity for dioxygen, which may limit its oxygen-releasing ability, argue against it. The ferrous/deoxygenated form exhibits a nitrite reductase activity and it could produce nitric oxide which in turn inhibits cellular respiration in response to hypoxia. In its ferrous/deoxygenated state, it may also exhibit GDI (Guanine nucleotide Dissociation Inhibitor) activity toward heterotrimeric G-alpha proteins, thereby regulating signal transduction to facilitate neuroprotective responses in the wake of hypoxia and associated oxidative stress. The polypeptide is Neuroglobin (Canis lupus familiaris (Dog)).